The following is an 87-amino-acid chain: Small ribosomal subunit protein bS16 (87 aa).

Belongs to the bacterial ribosomal protein bS16 family.

This Variovorax paradoxus (strain S110) protein is Small ribosomal subunit protein bS16.